A 67-amino-acid chain; its full sequence is Alpha-conotoxin-like Qc1.1b (67 aa).

The first 21 residues, 1 to 21 (MGMRMMFTMFLLVVLAITVVS), serve as a signal peptide directing secretion. The propeptide occupies 22–46 (FTSDHASDGRNTAANDKASKLMALR). Cystine bridges form between Cys49–Cys55 and Cys50–Cys63. The interval 51–53 (DNP) is lacks the Ser-Xaa-Pro motif that is crucial for potent interaction with nAChR.

This sequence belongs to the conotoxin A superfamily. As to expression, expressed by the venom duct.

It is found in the secreted. Functionally, alpha-conotoxins act on postsynaptic membranes, they bind to the nicotinic acetylcholine receptors (nAChR) and thus inhibit them. Has possibly a distinct nAChR binding mode from other alpha-conotoxins, due to a different three residue motif (lacks the Ser-Xaa-Pro motif). This chain is Alpha-conotoxin-like Qc1.1b, found in Conus quercinus (Oak cone).